An 828-amino-acid polypeptide reads, in one-letter code: Leucine--tRNA ligase (828 aa).

Positions 36-46 (PYPSGKIHIGH) match the 'HIGH' region motif. The 'KMSKS' region motif lies at 595–599 (KMSKS). Position 598 (Lys598) interacts with ATP.

The protein belongs to the class-I aminoacyl-tRNA synthetase family.

The protein resides in the cytoplasm. It carries out the reaction tRNA(Leu) + L-leucine + ATP = L-leucyl-tRNA(Leu) + AMP + diphosphate. In Rickettsia prowazekii (strain Madrid E), this protein is Leucine--tRNA ligase.